The primary structure comprises 227 residues: Lipoprotein-releasing system ATP-binding protein LolD (227 aa).

In terms of domain architecture, ABC transporter spans 7 to 227 (LRLERIGRAY…TLKDGRVVDL (221 aa)). 43–50 (APSGAGKS) contacts ATP.

It belongs to the ABC transporter superfamily. Lipoprotein translocase (TC 3.A.1.125) family. In terms of assembly, the complex is composed of two ATP-binding proteins (LolD) and two transmembrane proteins (LolC and LolE).

It is found in the cell inner membrane. In terms of biological role, part of the ABC transporter complex LolCDE involved in the translocation of mature outer membrane-directed lipoproteins, from the inner membrane to the periplasmic chaperone, LolA. Responsible for the formation of the LolA-lipoprotein complex in an ATP-dependent manner. The protein is Lipoprotein-releasing system ATP-binding protein LolD of Brucella abortus biovar 1 (strain 9-941).